The following is a 422-amino-acid chain: MQSLLLLATLLGSALGGAIPSQSANYNGYKVMRVSGDDTSKISHIVSKLGLETWKFPKAANANVDIVVPPKKVAEFEKMSHAAGLKKQVMHENLGDSIKSEMSFRPYSCELLTLDGGANDTWFQSYHKYEDHLKFMQDFQSAHSQNSEIVTSGKSHEGRDITGVHVWGSGEKGSKPAVVFHGTVHAREWITTMTVEYILAQLFDDKEAGAALLEKFDFYIFPIANPDGFVFTTESDRMWRKNREQNEGGCYGTDLNRNWPYKWEGDGSTTDPCSETYRGPSPGFAPETKASTSFIKGLADGAGVKMFVDWHSYSQLFMTPYGYSCSARAPNDDVLQEMASSFADAVKAVHGTSFTTGPICNTIYQANGNSVDWIVDEIKGETAFAAELRDTGMYGFVLPPEQIIPSGEETWAGVKAMFSKLK.

Residues M1 to G16 form the signal peptide. Residues G17–N119 constitute a propeptide, activation peptide. The Peptidase M14 domain occupies S125–L421. Positions 185 and 188 each coordinate Zn(2+). Substrate-binding positions include H185 to E188, R240, and N256 to R257. Cysteines 250 and 273 form a disulfide. H311 is a binding site for Zn(2+). S312–Y313 lines the substrate pocket. The active-site Proton donor/acceptor is E387.

The protein belongs to the peptidase M14 family. Zn(2+) serves as cofactor.

It localises to the secreted. In terms of biological role, extracellular metalloprotease that contributes to pathogenicity. The chain is Metallocarboxypeptidase A-like protein TRV_02598 from Trichophyton verrucosum (strain HKI 0517).